Here is a 289-residue protein sequence, read N- to C-terminus: Borealin (289 aa).

The segment at 1-58 is required for interaction with INCENP; sequence MAPKKRSSRGTRTNTLRSRKLASFLKDFDREVQVRTKQIESDRQTLLKEVENLYNIEI. The required for centromere localization stretch occupies residues 1-88; it reads MAPKKRSSRG…NKQALEEAAK (88 aa). The interval 1 to 150 is required for interaction with SENP3; it reads MAPKKRSSRG…KKSHKNLRSA (150 aa). The segment at 10 to 109 is required to form a minimal CPC core complex that localizes to the central spindle and midbody and properly executes the role of the CPC during cytokinesis; the sequence is GTRTNTLRSR…TAEAIQTPLK (100 aa). Residues 20–78 are required for interaction with INCENP and BIRC5; the sequence is KLASFLKDFDREVQVRTKQIESDRQTLLKEVENLYNIEILRLPKALQGMKWLDYFALGG. Position 91 is a citrulline (Arg91). Thr94 bears the Phosphothreonine; by TTK mark. At Thr106 the chain carries Phosphothreonine. At Ser110 the chain carries Phosphoserine. The disordered stretch occupies residues 122–173; it reads SIKEEEEEEEEGGGGGGRTKKSHKNLRSAKVKRCLPSKKRTQSIQGRGRSKR. Over residues 123-133 the composition is skewed to acidic residues; it reads IKEEEEEEEEG. Basic residues predominate over residues 139–162; that stretch reads RTKKSHKNLRSAKVKRCLPSKKRT. Residue Lys145 forms a Glycyl lysine isopeptide (Lys-Gly) (interchain with G-Cter in SUMO2) linkage. Ser175 carries the post-translational modification Phosphoserine. 2 positions are modified to phosphothreonine: Thr198 and Thr213. 4 positions are modified to phosphoserine: Ser228, Ser233, Ser247, and Ser253.

It belongs to the borealin family. In terms of assembly, may form homooligomers and homodimers. Component of the chromosomal passenger complex (CPC) composed of at least BIRC5/survivin, CDCA8/borealin, INCENP, AURKB or AURKC; in the complex forms a triple-helix bundle-based subcomplex with INCENP and BIRC5. Interacts with SENP3, UBE2I and RANBP2. Interacts (phosphorylated) with SGO1 and SGO2A; the association is dependent on CDK1. Phosphorylated by TTK, essentially at Thr-94. Phosphorylation (probably by CDK1) promotes targeting of the CPC to centromeric DNA. In terms of processing, sumoylated by UBE2I and RANBP2. Desumoylated by SENP3 through the removal of SUMO2 and SUMO3. Post-translationally, citrullinated by PADI4.

The protein resides in the nucleus. Its subcellular location is the nucleolus. The protein localises to the cytoplasm. It localises to the chromosome. It is found in the centromere. The protein resides in the cytoskeleton. Its subcellular location is the spindle. Its function is as follows. Component of the chromosomal passenger complex (CPC), a complex that acts as a key regulator of mitosis. The CPC complex has essential functions at the centromere in ensuring correct chromosome alignment and segregation and is required for chromatin-induced microtubule stabilization and spindle assembly. In the complex, it may be required to direct the CPC to centromeric DNA. Major effector of the TTK kinase in the control of attachment-error-correction and chromosome alignment. In Mus musculus (Mouse), this protein is Borealin (Cdca8).